Consider the following 189-residue polypeptide: MEIKPITIYTGKTVPLFYDNIDTDQIIPKVHLKRVSKSGFGPFAFDEWRYLPDGSDNPDFNPNKPKYHGASILITGDNFGCGSSREHAAWALKDYGFNIIIAGSFSDIFYMNCTKNAMLPICLNQKEREHLAQFDEITVDLPNQTVSTVSQSFHFDIDETWKNKLIHGLDDIAITLQFENLIEKYEKTF.

This sequence belongs to the LeuD family. LeuD type 1 subfamily. Heterodimer of LeuC and LeuD.

It carries out the reaction (2R,3S)-3-isopropylmalate = (2S)-2-isopropylmalate. It participates in amino-acid biosynthesis; L-leucine biosynthesis; L-leucine from 3-methyl-2-oxobutanoate: step 2/4. Functionally, catalyzes the isomerization between 2-isopropylmalate and 3-isopropylmalate, via the formation of 2-isopropylmaleate. In Staphylococcus epidermidis (strain ATCC 35984 / DSM 28319 / BCRC 17069 / CCUG 31568 / BM 3577 / RP62A), this protein is 3-isopropylmalate dehydratase small subunit.